We begin with the raw amino-acid sequence, 183 residues long: Large ribosomal subunit protein eL18 (183 aa).

The interval 146–183 is disordered; it reads HFGPAPGVPHSHTKPYVRSKGRKFEKARGRRKSRGFRV. 2 stretches are compositionally biased toward basic residues: residues 156-166 and 173-183; these read SHTKPYVRSKG and RGRRKSRGFRV.

This sequence belongs to the eukaryotic ribosomal protein eL18 family.

The polypeptide is Large ribosomal subunit protein eL18 (RPL18) (Cicer arietinum (Chickpea)).